The sequence spans 438 residues: GDP-mannose 6-dehydrogenase (438 aa).

NAD(+)-binding residues include Tyr-10, Val-11, Asp-30, Lys-35, Thr-86, and Thr-124. Glu-161, Lys-210, Asn-214, His-217, Asn-225, Tyr-256, Tyr-257, Arg-259, Phe-262, and Gly-265 together coordinate GDP-alpha-D-mannuronate. Residue Cys-268 is part of the active site. Lys-271 contributes to the NAD(+) binding site. Lys-324 lines the GDP-alpha-D-mannuronate pocket. Arg-331 serves as a coordination point for NAD(+).

This sequence belongs to the UDP-glucose/GDP-mannose dehydrogenase family.

The catalysed reaction is GDP-alpha-D-mannose + 2 NAD(+) + H2O = GDP-alpha-D-mannuronate + 2 NADH + 3 H(+). It functions in the pathway glycan biosynthesis; alginate biosynthesis. Catalyzes the oxidation of guanosine diphospho-D-mannose (GDP-D-mannose) to GDP-D-mannuronic acid, a precursor for alginate polymerization. The alginate layer causes a mucoid phenotype and provides a protective barrier against host immune defenses and antibiotics. In Pseudomonas putida (strain ATCC 47054 / DSM 6125 / CFBP 8728 / NCIMB 11950 / KT2440), this protein is GDP-mannose 6-dehydrogenase (algD).